The following is a 317-amino-acid chain: Aspartate carbamoyltransferase catalytic subunit (317 aa).

Carbamoyl phosphate-binding residues include Arg-66 and Thr-67. Lys-94 is an L-aspartate binding site. Residues Arg-116, His-144, and Gln-147 each coordinate carbamoyl phosphate. Arg-177 and Arg-231 together coordinate L-aspartate. Residues Gly-272 and Pro-273 each contribute to the carbamoyl phosphate site.

This sequence belongs to the aspartate/ornithine carbamoyltransferase superfamily. ATCase family. Heterododecamer (2C3:3R2) of six catalytic PyrB chains organized as two trimers (C3), and six regulatory PyrI chains organized as three dimers (R2).

The catalysed reaction is carbamoyl phosphate + L-aspartate = N-carbamoyl-L-aspartate + phosphate + H(+). Its pathway is pyrimidine metabolism; UMP biosynthesis via de novo pathway; (S)-dihydroorotate from bicarbonate: step 2/3. Catalyzes the condensation of carbamoyl phosphate and aspartate to form carbamoyl aspartate and inorganic phosphate, the committed step in the de novo pyrimidine nucleotide biosynthesis pathway. This chain is Aspartate carbamoyltransferase catalytic subunit, found in Rhodopseudomonas palustris (strain BisB5).